We begin with the raw amino-acid sequence, 198 residues long: NAD(P)H-quinone oxidoreductase chain 6 (198 aa).

A run of 5 helical transmembrane segments spans residues 9-29 (YISF…VVLL), 32-52 (IVYS…IYIL), 61-81 (AQVL…IMLV), 100-120 (TALV…ITPW), and 145-165 (LLPF…AIIL).

This sequence belongs to the complex I subunit 6 family.

Its subcellular location is the membrane. The enzyme catalyses a plastoquinone + NADH + (n+1) H(+)(in) = a plastoquinol + NAD(+) + n H(+)(out). It catalyses the reaction a plastoquinone + NADPH + (n+1) H(+)(in) = a plastoquinol + NADP(+) + n H(+)(out). Functionally, NDH-1 shuttles electrons from NAD(P)H, via FMN and iron-sulfur (Fe-S) centers, to quinones in the respiratory chain. The immediate electron acceptor for the enzyme in this species is believed to be plastoquinone. Couples the redox reaction to proton translocation (for every two electrons transferred, four hydrogen ions are translocated across the cytoplasmic membrane), and thus conserves the redox energy in a proton gradient. In Synechocystis sp. (strain ATCC 27184 / PCC 6803 / Kazusa), this protein is NAD(P)H-quinone oxidoreductase chain 6 (ndhG).